The sequence spans 72 residues: RTCYKTYSDKSKTCPRGEDICYTKTWCDGFCSQRGKRVELGCAATCPKVKTGVEIKCCSTDYCNPFPVWNPR.

Intrachain disulfides connect C3-C21, C14-C42, C27-C31, C46-C57, and C58-C63.

It belongs to the three-finger toxin family. Long-chain subfamily. Type II alpha-neurotoxin sub-subfamily. In terms of tissue distribution, expressed by the venom gland.

It is found in the secreted. Binds with high affinity to muscular (alpha-1/CHRNA1) and neuronal (alpha-7/CHRNA7) nicotinic acetylcholine receptor (nAChR) and inhibits acetylcholine from binding to the receptor, thereby impairing neuromuscular and neuronal transmission. The sequence is that of Alpha-elapitoxin-Djk2a from Dendroaspis jamesoni kaimosae (Eastern Jameson's mamba).